Here is a 91-residue protein sequence, read N- to C-terminus: Putative transmembrane protein encoded by LINC00862 (91 aa).

Residues 49–69 (IMALILMPSLHCFGNILILLF) traverse the membrane as a helical segment.

It is found in the membrane. The polypeptide is Putative transmembrane protein encoded by LINC00862 (LINC00862) (Homo sapiens (Human)).